The sequence spans 642 residues: Threonine--tRNA ligase (642 aa).

Positions 1 to 61 (MPVITLPDGS…ENDTQLSIIT (61 aa)) constitute a TGS domain. The catalytic stretch occupies residues 243–534 (DHRKIGKQLD…LTEEFAGFFP (292 aa)). Lys286 carries the N6-acetyllysine modification. Zn(2+) is bound by residues Cys334, His385, and His511.

This sequence belongs to the class-II aminoacyl-tRNA synthetase family. Homodimer. The cofactor is Zn(2+).

The protein resides in the cytoplasm. It carries out the reaction tRNA(Thr) + L-threonine + ATP = L-threonyl-tRNA(Thr) + AMP + diphosphate + H(+). Its function is as follows. Catalyzes the attachment of threonine to tRNA(Thr) in a two-step reaction: L-threonine is first activated by ATP to form Thr-AMP and then transferred to the acceptor end of tRNA(Thr). Also edits incorrectly charged L-seryl-tRNA(Thr). In Shigella dysenteriae serotype 1 (strain Sd197), this protein is Threonine--tRNA ligase.